We begin with the raw amino-acid sequence, 49 residues long: Small, acid-soluble spore protein O (49 aa).

Residues 24–49 form a disordered region; the sequence is GYNEEFSNEPLTEAQRQNNKKRKKNQ.

Belongs to the SspO family.

It localises to the spore core. The protein is Small, acid-soluble spore protein O of Geobacillus kaustophilus (strain HTA426).